A 150-amino-acid chain; its full sequence is Lymphotoxin-beta (150 aa).

A THD domain is found at 1-149; the sequence is AWITGQGLGW…GKTFFGAVMV (149 aa). A glycan (N-linked (GlcNAc...) asparagine) is linked at Asn-128.

The protein belongs to the tumor necrosis factor family. As to quaternary structure, heterotrimer of either two LTB and one LTA subunits or (less prevalent) two LTA and one LTB subunits.

It localises to the membrane. In terms of biological role, cytokine that binds to LTBR/TNFRSF3. May play a specific role in immune response regulation. Provides the membrane anchor for the attachment of the heterotrimeric complex to the cell surface. In Sus scrofa (Pig), this protein is Lymphotoxin-beta (LTB).